The primary structure comprises 310 residues: Ornithine carbamoyltransferase (310 aa).

Residues 56-59 (STRT), Gln-83, Arg-107, and 134-137 (HPCQ) contribute to the carbamoyl phosphate site. L-ornithine contacts are provided by residues Asn-165, Asp-229, and 233 to 234 (SM). Carbamoyl phosphate-binding positions include 269–270 (CL) and Arg-297.

The protein belongs to the aspartate/ornithine carbamoyltransferase superfamily. OTCase family.

The protein resides in the cytoplasm. The catalysed reaction is carbamoyl phosphate + L-ornithine = L-citrulline + phosphate + H(+). Its pathway is amino-acid biosynthesis; L-arginine biosynthesis; L-arginine from L-ornithine and carbamoyl phosphate: step 1/3. Functionally, reversibly catalyzes the transfer of the carbamoyl group from carbamoyl phosphate (CP) to the N(epsilon) atom of ornithine (ORN) to produce L-citrulline. This chain is Ornithine carbamoyltransferase, found in Symbiobacterium thermophilum (strain DSM 24528 / JCM 14929 / IAM 14863 / T).